Reading from the N-terminus, the 288-residue chain is NAD kinase (288 aa).

Asp-70 functions as the Proton acceptor in the catalytic mechanism. NAD(+) contacts are provided by residues Asp-70–Gly-71, Asn-144–Asp-145, Arg-155, Lys-172, Asp-174, Thr-185–Ser-190, and Gln-245.

Belongs to the NAD kinase family. Requires a divalent metal cation as cofactor.

It localises to the cytoplasm. The catalysed reaction is NAD(+) + ATP = ADP + NADP(+) + H(+). In terms of biological role, involved in the regulation of the intracellular balance of NAD and NADP, and is a key enzyme in the biosynthesis of NADP. Catalyzes specifically the phosphorylation on 2'-hydroxyl of the adenosine moiety of NAD to yield NADP. The polypeptide is NAD kinase (Citrifermentans bemidjiense (strain ATCC BAA-1014 / DSM 16622 / JCM 12645 / Bem) (Geobacter bemidjiensis)).